A 303-amino-acid chain; its full sequence is Vesicle-trafficking protein SEC22c (303 aa).

The Cytoplasmic segment spans residues 1 to 183 (MSLILFACVV…EPAPSFRMEP (183 aa)). Residues 8-119 (CVVRVRDGLP…YAFLEFDNVI (112 aa)) enclose the Longin domain. The chain crosses the membrane as a helical span at residues 184–204 (VTALGILSLILNIMCAALNLI). Over 205-223 (RGIHLAEHSLQVAHEEIGN) the chain is Lumenal. Residues 224 to 244 (ILAFLIPFVACIFQCYLYLFY) form a helical membrane-spanning segment. Residues 245–248 (SPAR) are Cytoplasmic-facing. Residues 249 to 269 (TMKVVLMLLFICLGNVYLHGL) traverse the membrane as a helical segment. Position 270 (Arg-270) is a topological domain, lumenal. Residues 271 to 291 (NLWQILFHIGVAFLSSHQILT) traverse the membrane as a helical segment. Residues 292–303 (RQLQDKQSDCGV) lie on the Cytoplasmic side of the membrane.

This sequence belongs to the synaptobrevin family.

The protein resides in the endoplasmic reticulum membrane. May be involved in vesicle transport between the ER and the Golgi complex. The protein is Vesicle-trafficking protein SEC22c (SEC22C) of Bos taurus (Bovine).